A 607-amino-acid chain; its full sequence is ATP-dependent RNA helicase dbp9 (607 aa).

Positions 24–52 match the Q motif motif; that stretch reads ATFASLGLDARLLQGIAKQNFQSPTLVQS. The region spanning 55-232 is the Helicase ATP-binding domain; it reads IPLTLEGRDI…GLFCRNPEVL (178 aa). Position 68–75 (68–75) interacts with ATP; sequence AKTGSGKT. The DEAD box signature appears at 180–183; it reads DEAD. Residues 243–475 enclose the Helicase C-terminal domain; that stretch reads GVSQFVVKCA…EVKPYNFDMK (233 aa). Disordered stretches follow at residues 332-380 and 580-607; these read VLGD…GKKD and ARAA…KSRK. Acidic residues predominate over residues 334–352; the sequence is GDEDEPKPEETEEVEADDA. Residues 353–368 are compositionally biased toward basic and acidic residues; sequence SGEKEDAKDAKKETKQ. Residues 580 to 592 show a composition bias toward basic residues; the sequence is ARAANKAKGRGKG.

The protein belongs to the DEAD box helicase family. DDX56/DBP9 subfamily.

Its subcellular location is the nucleus. The protein localises to the nucleolus. The catalysed reaction is ATP + H2O = ADP + phosphate + H(+). In terms of biological role, ATP-binding RNA helicase involved in the biogenesis of 60S ribosomal subunits and is required for the normal formation of 25S and 5.8S rRNAs. The sequence is that of ATP-dependent RNA helicase dbp9 (dbp9) from Sclerotinia sclerotiorum (strain ATCC 18683 / 1980 / Ss-1) (White mold).